A 90-amino-acid chain; its full sequence is MYKCSQGAMNTEKVMEKFVIQSRFREMYPDKAKAIAGMTVPARYADSVEDMVAFANEKIRVQKAKVEAEKNARQAMGAPAKFDKYGKYKY.

This is an uncharacterized protein from Aedes vexans (Inland floodwater mosquito).